Reading from the N-terminus, the 244-residue chain is Phosphoadenosine 5'-phosphosulfate reductase (244 aa).

The active-site Nucleophile; cysteine thiosulfonate intermediate is cysteine 239.

This sequence belongs to the PAPS reductase family. CysH subfamily.

The protein resides in the cytoplasm. It carries out the reaction [thioredoxin]-disulfide + sulfite + adenosine 3',5'-bisphosphate + 2 H(+) = [thioredoxin]-dithiol + 3'-phosphoadenylyl sulfate. The protein operates within sulfur metabolism; hydrogen sulfide biosynthesis; sulfite from sulfate: step 3/3. In terms of biological role, catalyzes the formation of sulfite from phosphoadenosine 5'-phosphosulfate (PAPS) using thioredoxin as an electron donor. The sequence is that of Phosphoadenosine 5'-phosphosulfate reductase from Shigella boydii serotype 4 (strain Sb227).